The sequence spans 414 residues: tRNA methyltransferase 10 homolog C (414 aa).

Residues 1-35 (MNVTVRFLRPFARCLVPYTFHRKRSHLYSGVLQRY) constitute a mitochondrion transit peptide. Ser-79 carries the phosphoserine modification. The stretch at 133–171 (GKEKAKKAKQVKKEMKAEAREEAKRARLLETTAEEQQQD) forms a coiled coil. Positions 186-378 (LGWKGVQAMQ…KFVPRRKHTG (193 aa)) constitute an SAM-dependent MTase TRM10-type domain.

It belongs to the class IV-like SAM-binding methyltransferase superfamily. TRM10 family. As to quaternary structure, component of mitochondrial ribonuclease P, a complex composed of TRMT10C/MRPP1, HSD17B10/MRPP2 and PRORP/MRPP3. Interacts with HSD17B10/MRPP2; forming the MRPP1-MRPP2 subcomplex of the mitochondrial ribonuclease P complex. Interacts with GRSF1.

The protein localises to the mitochondrion matrix. Its subcellular location is the mitochondrion nucleoid. It carries out the reaction adenosine(9) in tRNA + S-adenosyl-L-methionine = N(1)-methyladenosine(9) in tRNA + S-adenosyl-L-homocysteine + H(+). The enzyme catalyses guanosine(9) in tRNA + S-adenosyl-L-methionine = N(1)-methylguanosine(9) in tRNA + S-adenosyl-L-homocysteine + H(+). The catalysed reaction is an adenosine in mRNA + S-adenosyl-L-methionine = an N(1)-methyladenosine in mRNA + S-adenosyl-L-homocysteine + H(+). Its function is as follows. Mitochondrial tRNA N(1)-methyltransferase involved in mitochondrial tRNA maturation. Component of mitochondrial ribonuclease P, a complex composed of TRMT10C/MRPP1, HSD17B10/MRPP2 and PRORP/MRPP3, which cleaves tRNA molecules in their 5'-ends. Together with HSD17B10/MRPP2, forms a subcomplex of the mitochondrial ribonuclease P, named MRPP1-MRPP2 subcomplex, which displays functions that are independent of the ribonuclease P activity. The MRPP1-MRPP2 subcomplex catalyzes the formation of N(1)-methylguanine and N(1)-methyladenine at position 9 (m1G9 and m1A9, respectively) in tRNAs; TRMT10C/MRPP1 acting as the catalytic N(1)-methyltransferase subunit. The MRPP1-MRPP2 subcomplex also acts as a tRNA maturation platform: following 5'-end cleavage by the mitochondrial ribonuclease P complex, the MRPP1-MRPP2 subcomplex enhances the efficiency of 3'-processing catalyzed by ELAC2, retains the tRNA product after ELAC2 processing and presents the nascent tRNA to the mitochondrial CCA tRNA nucleotidyltransferase TRNT1 enzyme. In addition to tRNA N(1)-methyltransferase activity, TRMT10C/MRPP1 also acts as a mRNA N(1)-methyltransferase by mediating methylation of adenosine residues at the N(1) position of MT-ND5 mRNA. Associates with mitochondrial DNA complexes at the nucleoids to initiate RNA processing and ribosome assembly. In Mus musculus (Mouse), this protein is tRNA methyltransferase 10 homolog C.